We begin with the raw amino-acid sequence, 120 residues long: MSYILGTNLNSNKQVKIALTRIFGIGPKKAIQVCDQLGLSDTIKVNKLTKYQFDQILKIISQNYLVDSELKRVIQRDIKRLISIGCYRGFRHNAGLPLRGQRTHTNAKTCRKLRYVSIRS.

The protein belongs to the universal ribosomal protein uS13 family. In terms of assembly, part of the small ribosomal subunit.

It localises to the mitochondrion. In terms of biological role, located at the top of the head of the small subunit, it contacts several helices of the 18S rRNA. The sequence is that of Small ribosomal subunit protein uS13m (RPS13) from Marchantia polymorpha (Common liverwort).